The following is a 218-amino-acid chain: Alkylmercury lyase (218 aa).

This sequence belongs to the MerB family.

It carries out the reaction an alkylmercury + H(+) = an alkane + Hg(2+). Functionally, cleaves the carbon-mercury bond of organomercurials such as phenylmercuric acetate. One product is Hg(2+), which is subsequently detoxified by the mercuric reductase. The chain is Alkylmercury lyase from Clostridium butyricum.